Consider the following 354-residue polypeptide: Green-sensitive opsin-3 (354 aa).

Over 1–39 (MSGLNGFEGDNFYIPMSNRTGLVRDPFVYEQYYLAEPWQ) the chain is Extracellular. An N-linked (GlcNAc...) asparagine glycan is attached at Asn18. A helical membrane pass occupies residues 40-64 (FKLLACYMFFLICLGLPINGFTLFV). At 65 to 76 (TAQHKKLQQPLN) the chain is on the cytoplasmic side. Residues 77–102 (FILVNLAVAGMIMVCFGFTITISSAV) form a helical membrane-spanning segment. The Extracellular portion of the chain corresponds to 103–116 (NGYFYFGPTACAIE). Cys113 and Cys190 form a disulfide bridge. A helical membrane pass occupies residues 117 to 136 (GFMATLGGEVALWSLVVLAI). Over 137-155 (ERYIVVCKPMGSFKFSASH) the chain is Cytoplasmic. A helical membrane pass occupies residues 156-179 (ALGGIGFTWFMAMTCAAPPLVGWS). At 180–205 (RYIPEGLQCSCGPDYYTLNPKYNNES) the chain is on the extracellular side. N-linked (GlcNAc...) asparagine glycosylation occurs at Asn203. The chain crosses the membrane as a helical span at residues 206–233 (YVIYMFVVHFIVPVTVIFFTYGRLVCTV). The Cytoplasmic portion of the chain corresponds to 234–255 (KSAAAAQQDSASTQKAEKEVTR). A helical transmembrane segment spans residues 256–279 (MVILMVVGFLVAWTPYATVAAWIF). Topologically, residues 280–287 (FNKGAAFT) are extracellular. The helical transmembrane segment at 288–312 (AQFMAVPAFFSKSSALFNPIIYVLL) threads the bilayer. Lys299 bears the N6-(retinylidene)lysine mark. Residues 313–354 (NKQFRNCMLTTLFCGKNPLGDEESSTVSTKTEVSTVSSVSPA) lie on the Cytoplasmic side of the membrane.

The protein belongs to the G-protein coupled receptor 1 family. Opsin subfamily. As to expression, the color pigments are found in the cone photoreceptor cells.

It is found in the membrane. In terms of biological role, visual pigments are the light-absorbing molecules that mediate vision. They consist of an apoprotein, opsin, covalently linked to cis-retinal. This Psalidodon fasciatus (Banded astyanax) protein is Green-sensitive opsin-3 (RH11).